A 172-amino-acid polypeptide reads, in one-letter code: Phosphopantetheine adenylyltransferase (172 aa).

Residue Thr-14 participates in substrate binding. ATP-binding positions include 14 to 15 (TF) and His-22. Lys-46, Leu-78, and Arg-92 together coordinate substrate. ATP-binding positions include 93-95 (GLR), Glu-103, and 128-134 (WLYISST).

It belongs to the bacterial CoaD family. Homohexamer. The cofactor is Mg(2+).

The protein localises to the cytoplasm. The enzyme catalyses (R)-4'-phosphopantetheine + ATP + H(+) = 3'-dephospho-CoA + diphosphate. It participates in cofactor biosynthesis; coenzyme A biosynthesis; CoA from (R)-pantothenate: step 4/5. Its function is as follows. Reversibly transfers an adenylyl group from ATP to 4'-phosphopantetheine, yielding dephospho-CoA (dPCoA) and pyrophosphate. The protein is Phosphopantetheine adenylyltransferase of Lawsonia intracellularis (strain PHE/MN1-00).